The primary structure comprises 295 residues: Ubiquitin-conjugating enzyme E2-34 kDa (295 aa).

The region spanning 7–169 (TASSLLLRQY…VKMEVERSKQ (163 aa)) is the UBC core domain. Cys95 (glycyl thioester intermediate) is an active-site residue. A disordered region spans residues 185–295 (ISQSKLDEPE…EDVERVSKKI (111 aa)). Residue Ser186 is modified to Phosphoserine. Positions 189-200 (KLDEPESNKDMA) are enriched in basic and acidic residues. Acidic residues-rich tracts occupy residues 207-226 (SDLD…DYDD) and 234-265 (EDDD…DSID). Positions 269–279 (VMDRKQPHKAE) are enriched in basic and acidic residues. Phosphoserine occurs at positions 282 and 292.

This sequence belongs to the ubiquitin-conjugating enzyme family. As to quaternary structure, interacts with CDC53. Component of the E3 ubiquitin ligase complexes SCF with CDC53, SKP1/CBF3D, HRT1 and some F-box proteins like MET30 and CDC4.

It is found in the cytoplasm. It localises to the nucleus. The enzyme catalyses S-ubiquitinyl-[E1 ubiquitin-activating enzyme]-L-cysteine + [E2 ubiquitin-conjugating enzyme]-L-cysteine = [E1 ubiquitin-activating enzyme]-L-cysteine + S-ubiquitinyl-[E2 ubiquitin-conjugating enzyme]-L-cysteine.. The protein operates within protein modification; protein ubiquitination. Its function is as follows. Catalyzes the covalent attachment of ubiquitin to other proteins. Capable, in vitro, to ubiquitinate histone H2A. Mediates the initiation of DNA replication (transition of G1 to S phase in cell cycle). Essential component of the E3 ubiquitin ligase complex SCF (SKP1-CUL1-F-box protein), which mediates the ubiquitination and subsequent proteasomal degradation of target proteins. Involved in the regulation of methionine biosynthesis genes and in the degradation of CDC6 together with CDC4 and CDC53. The chain is Ubiquitin-conjugating enzyme E2-34 kDa (CDC34) from Saccharomyces cerevisiae (strain ATCC 204508 / S288c) (Baker's yeast).